Reading from the N-terminus, the 410-residue chain is MKNLVGRFMRYVTFDTQSKPKNHHCPSSTGQKVFAQALYEELLELGLSDVSLDDHGYVMAKLPSNVNYPVPAIGFIAHMDTSPDACGKHVKPQIVEDYQGGDIALGKGDEVLSPIQYPDLHLLHGYNLITTDGTTLLGADNKAGIAEIITAMEILLADPSIPHGDISIAFTPDEEIGRGANHFDVAKFAAQWAYTIDGGPIGELEYENFNAATATVVCHGVNVHPGTAKDKMVNAMHIAAQFILMMPENETPQHTEGYQGFYHLSGATMSVAKSELKYILRDFEAIGLQARQALMQAKVAELNQQLKKGRVEVSFEQSYSNMKEKVEPHPHIIELAKQAMVACDVEPKIKPIRGGTDGARLSFMGLPCPNIFTGGYNFHGIHEFITIEGMEAAVQVIVKLAEKTALHYRQ.

His-78 is a Zn(2+) binding site. Asp-80 is a catalytic residue. A Zn(2+)-binding site is contributed by Asp-140. Glu-174 (proton acceptor) is an active-site residue. Zn(2+) contacts are provided by Glu-175, Asp-197, and His-379.

It belongs to the peptidase M20B family. The cofactor is Zn(2+).

The protein localises to the cytoplasm. The catalysed reaction is Release of the N-terminal residue from a tripeptide.. Its function is as follows. Cleaves the N-terminal amino acid of tripeptides. In Vibrio cholerae serotype O1 (strain ATCC 39315 / El Tor Inaba N16961), this protein is Peptidase T.